The chain runs to 202 residues: ATP-dependent Clp protease proteolytic subunit (202 aa).

The Nucleophile role is filled by Ser101. The active site involves His126.

This sequence belongs to the peptidase S14 family. Component of the chloroplastic Clp protease core complex.

Its subcellular location is the plastid. It localises to the chloroplast stroma. The catalysed reaction is Hydrolysis of proteins to small peptides in the presence of ATP and magnesium. alpha-casein is the usual test substrate. In the absence of ATP, only oligopeptides shorter than five residues are hydrolyzed (such as succinyl-Leu-Tyr-|-NHMec, and Leu-Tyr-Leu-|-Tyr-Trp, in which cleavage of the -Tyr-|-Leu- and -Tyr-|-Trp bonds also occurs).. Functionally, cleaves peptides in various proteins in a process that requires ATP hydrolysis. Has a chymotrypsin-like activity. Plays a major role in the degradation of misfolded proteins. The sequence is that of ATP-dependent Clp protease proteolytic subunit from Buxus microphylla (Littleleaf boxwood).